The sequence spans 391 residues: Homocysteine-responsive endoplasmic reticulum-resident ubiquitin-like domain member 1 protein (391 aa).

Residue methionine 1 is modified to N-acetylmethionine. Residues 1-263 (MEPEPQPEPV…VEEDDEINRD (263 aa)) lie on the Cytoplasmic side of the membrane. A Ubiquitin-like domain is found at 10–72 (VTLLVKSPNQ…LLDHQCLQDL (63 aa)). The interval 90–126 (NPSKMPETSTKGAESTEQPDNSNQTQHPGDSSSDGLR) is disordered. The segment covering 95–124 (PETSTKGAESTEQPDNSNQTQHPGDSSSDG) has biased composition (polar residues). The segment at 115–200 (QHPGDSSSDG…ASGTFVPTPS (86 aa)) is interaction with UBQLN1. Serine 135 carries the phosphoserine modification. A helical transmembrane segment spans residues 264–284 (WLDWTYSAATFSVFLSILYFY). Residues 285–289 (SSLSR) lie on the Lumenal side of the membrane. A helical membrane pass occupies residues 290 to 310 (FLMVMGATVVMYLHHVGWFPF). Residues 311–391 (RQRPVQNFPD…LPEGPPALAN (81 aa)) are Cytoplasmic-facing. Positions 317–361 (NFPDDGGPRDAANQDPNNNLQGGMDPEMEDPNRLPPDREVLDPEH) are disordered. The segment covering 346-361 (DPNRLPPDREVLDPEH) has biased composition (basic and acidic residues).

Interacts with PSEN1 and PSEN2. Interacts with UBXN6. Interacts with UBQLN1, UBQLN2 and UBQLN4. Component of the HRD1 complex, which comprises at least SYNV1/HRD1, FAM8A1, HERPUD1/HERP, OS9, SEL1L and UBE2J1. FAM8A1 binding to SYNV1 may promote recruitment of HERPUD1 to the HRD1 complex.

It is found in the endoplasmic reticulum membrane. Its function is as follows. Component of the endoplasmic reticulum quality control (ERQC) system also called ER-associated degradation (ERAD) involved in ubiquitin-dependent degradation of misfolded endoplasmic reticulum proteins. Binds to ubiquilins and this interaction is required for efficient degradation of CD3D via the ERAD pathway. The sequence is that of Homocysteine-responsive endoplasmic reticulum-resident ubiquitin-like domain member 1 protein (Herpud1) from Mus musculus (Mouse).